An 83-amino-acid polypeptide reads, in one-letter code: Sulfur carrier protein TusA (83 aa).

Cysteine 20 (cysteine persulfide intermediate) is an active-site residue.

Belongs to the sulfur carrier protein TusA family.

The protein localises to the cytoplasm. Its function is as follows. Sulfur carrier protein which probably makes part of a sulfur-relay system. The polypeptide is Sulfur carrier protein TusA (Pseudomonas fluorescens (strain SBW25)).